Consider the following 362-residue polypeptide: Carbamoyl phosphate synthase small chain (362 aa).

Residues Met1–Gly172 form a CPSase region. The L-glutamine site is built by Ser45, Gly224, and Gly226. One can recognise a Glutamine amidotransferase type-1 domain in the interval Lys176–Gly362. Catalysis depends on Cys252, which acts as the Nucleophile. Residues Leu253, Gln256, Asn294, Gly296, and Phe297 each coordinate L-glutamine. Residues His335 and Glu337 contribute to the active site.

Belongs to the CarA family. Composed of two chains; the small (or glutamine) chain promotes the hydrolysis of glutamine to ammonia, which is used by the large (or ammonia) chain to synthesize carbamoyl phosphate. Tetramer of heterodimers (alpha,beta)4.

The catalysed reaction is hydrogencarbonate + L-glutamine + 2 ATP + H2O = carbamoyl phosphate + L-glutamate + 2 ADP + phosphate + 2 H(+). It carries out the reaction L-glutamine + H2O = L-glutamate + NH4(+). The protein operates within amino-acid biosynthesis; L-arginine biosynthesis; carbamoyl phosphate from bicarbonate: step 1/1. It participates in pyrimidine metabolism; UMP biosynthesis via de novo pathway; (S)-dihydroorotate from bicarbonate: step 1/3. Its function is as follows. Small subunit of the glutamine-dependent carbamoyl phosphate synthetase (CPSase). CPSase catalyzes the formation of carbamoyl phosphate from the ammonia moiety of glutamine, carbonate, and phosphate donated by ATP, constituting the first step of 2 biosynthetic pathways, one leading to arginine and/or urea and the other to pyrimidine nucleotides. The small subunit (glutamine amidotransferase) binds and cleaves glutamine to supply the large subunit with the substrate ammonia. This Leptospira interrogans serogroup Icterohaemorrhagiae serovar Lai (strain 56601) protein is Carbamoyl phosphate synthase small chain.